Reading from the N-terminus, the 487-residue chain is L-tartrate/succinate antiporter (487 aa).

Transmembrane regions (helical) follow at residues 10–30 (YLAP…AGLE), 33–53 (TWLY…EPVP), 54–74 (GAVV…WLLF), 93–113 (WAVF…FMFG), 137–157 (TLFL…VTPS), 189–209 (IGSY…AIFL), 236–256 (FLGM…LAYV), 292–312 (LMVG…AAMV), 313–333 (GYSV…DIVS), 340–360 (VFFW…TGFI), 370–390 (SLSG…FYLL), 393–413 (FFAS…AAAL), 418–438 (IPLP…SILT), and 465–485 (IFGL…MPVV).

The protein belongs to the SLC13A/DASS transporter (TC 2.A.47) family. DIT1 subfamily.

It is found in the cell inner membrane. The enzyme catalyses (2R,3R)-tartrate(out) + succinate(in) = (2R,3R)-tartrate(in) + succinate(out). In terms of biological role, catalyzes the uptake of tartrate in exchange for intracellular succinate. Essential for anaerobic L-tartrate fermentation. The chain is L-tartrate/succinate antiporter (ttdT) from Shigella boydii serotype 4 (strain Sb227).